Here is a 491-residue protein sequence, read N- to C-terminus: Delayed-rectifier potassium channel regulatory subunit KCNS3 (491 aa).

Topologically, residues 1-182 (MVFGEFFHRP…IRMENPAYCL (182 aa)) are cytoplasmic. A helical membrane pass occupies residues 183-204 (SAKLIAISSLSVVLASIVAMCV). Over 205–220 (HSMSEFQNEDGEVDDP) the chain is Extracellular. Residues 221 to 243 (VLEGVEIACIAWFTGELAVRLAA) form a helical membrane-spanning segment. The Cytoplasmic segment spans residues 244 to 254 (APCQKKFWKNP). A helical membrane pass occupies residues 255–275 (LNIIDFVSIIPFYATLAVDTK). At 276 to 285 (EEESEDIENM) the chain is on the extracellular side. The chain crosses the membrane as a helical; Voltage-sensor span at residues 286-306 (GKVVQILRLMRIFRILKLARH). The Cytoplasmic portion of the chain corresponds to 307-321 (SVGLRSLGATLRHSY). A helical transmembrane segment spans residues 322–343 (HEVGLLLLFLSVGISIFSVLIY). Over 344-357 (SVEKDDHTSSLTSI) the chain is Extracellular. The segment at residues 358–369 (PICWWWATISMT) is an intramembrane region (helical). Positions 370–375 (TVGYGD) match the Selectivity filter motif. Residues 370 to 377 (TVGYGDTH) lie within the membrane without spanning it. At 378 to 384 (PVTLAGK) the chain is on the extracellular side. Residues 385 to 413 (LIASTCIICGILVVALPITIIFNKFSKYY) form a helical membrane-spanning segment. Residues 414-491 (QKQKDIDVDQ…TTSLENCTAK (78 aa)) lie on the Cytoplasmic side of the membrane.

This sequence belongs to the potassium channel family. S (TC 1.A.1.2) subfamily. Kv9.3/KCNS3 sub-subfamily. As to quaternary structure, heterotetramer with KCNB1. Does not form homomultimers. Detected in whole normal term placental and placental chorionic plate arteries and veins. Detected in syncytiotrophoblast and in blood vessel endothelium within intermediate villi and chorionic plate (at protein level). Detected in most tissues, but not in peripheral blood lymphocytes. The highest levels of expression are in lung.

Its subcellular location is the cell membrane. Functionally, potassium channel regulatory subunit that modulates the delayed rectifier potassium channel activity of KCNB1 by namely slowing down the deactivation and inactivation time constants. While it does not form functional channel on its own, it can form functional heterotetrameric channels with KCNB1. This Homo sapiens (Human) protein is Delayed-rectifier potassium channel regulatory subunit KCNS3.